We begin with the raw amino-acid sequence, 752 residues long: DNA ligase (752 aa).

The interval 1-25 (MKRNGFVPSNSVGRRGIPSNSTSSA) is disordered. NAD(+)-binding positions include 91–95 (DADFD), 140–141 (SL), and Glu170. The active-site N6-AMP-lysine intermediate is the Lys172. Positions 193, 233, 350, and 374 each coordinate NAD(+). Residues Cys474, Cys477, Cys493, and Cys499 each coordinate Zn(2+). Positions 669 to 752 (STPRTLAGLT…TLLDGGPAAL (84 aa)) constitute a BRCT domain.

It belongs to the NAD-dependent DNA ligase family. LigA subfamily. It depends on Mg(2+) as a cofactor. The cofactor is Mn(2+).

The catalysed reaction is NAD(+) + (deoxyribonucleotide)n-3'-hydroxyl + 5'-phospho-(deoxyribonucleotide)m = (deoxyribonucleotide)n+m + AMP + beta-nicotinamide D-nucleotide.. Its function is as follows. DNA ligase that catalyzes the formation of phosphodiester linkages between 5'-phosphoryl and 3'-hydroxyl groups in double-stranded DNA using NAD as a coenzyme and as the energy source for the reaction. It is essential for DNA replication and repair of damaged DNA. The polypeptide is DNA ligase (Nocardioides sp. (strain ATCC BAA-499 / JS614)).